The following is a 383-amino-acid chain: Succinyl-diaminopimelate desuccinylase (383 aa).

Histidine 74 contributes to the Zn(2+) binding site. Aspartate 76 is an active-site residue. Aspartate 107 is a Zn(2+) binding site. Glutamate 141 acts as the Proton acceptor in catalysis. Zn(2+) is bound by residues glutamate 142, glutamate 170, and histidine 356.

It belongs to the peptidase M20A family. DapE subfamily. In terms of assembly, homodimer. Requires Zn(2+) as cofactor. It depends on Co(2+) as a cofactor.

The enzyme catalyses N-succinyl-(2S,6S)-2,6-diaminopimelate + H2O = (2S,6S)-2,6-diaminopimelate + succinate. It functions in the pathway amino-acid biosynthesis; L-lysine biosynthesis via DAP pathway; LL-2,6-diaminopimelate from (S)-tetrahydrodipicolinate (succinylase route): step 3/3. Functionally, catalyzes the hydrolysis of N-succinyl-L,L-diaminopimelic acid (SDAP), forming succinate and LL-2,6-diaminopimelate (DAP), an intermediate involved in the bacterial biosynthesis of lysine and meso-diaminopimelic acid, an essential component of bacterial cell walls. The polypeptide is Succinyl-diaminopimelate desuccinylase (Cupriavidus pinatubonensis (strain JMP 134 / LMG 1197) (Cupriavidus necator (strain JMP 134))).